Here is a 104-residue protein sequence, read N- to C-terminus: COX assembly mitochondrial protein 1 (104 aa).

A CHCH domain is found at 10–52 (QKQCADLIRALEECHKSFGKFFGECNTIKYELKACLTKDRNDK). 2 short sequence motifs (cx9C motif) span residues 13-23 (CADLIRALEEC) and 34-44 (CNTIKYELKAC). Intrachain disulfides connect cysteine 13/cysteine 44 and cysteine 23/cysteine 34.

This sequence belongs to the CMC family.

It is found in the mitochondrion inner membrane. In terms of biological role, required for mitochondrial cytochrome c oxidase (COX) assembly and respiration. The chain is COX assembly mitochondrial protein 1 (cmc1) from Schizosaccharomyces pombe (strain 972 / ATCC 24843) (Fission yeast).